The primary structure comprises 266 residues: Cytosolic Fe-S cluster assembly factor Nubp2 homolog (266 aa).

14 to 21 contacts ATP; that stretch reads GKGGVGKS. Residues C188 and C191 each coordinate [4Fe-4S] cluster.

The protein belongs to the Mrp/NBP35 ATP-binding proteins family. Nubp2/CFD1 subfamily. In terms of assembly, heterotetramer of 2 Nubp1 and 2 Nubp2 chains. [4Fe-4S] cluster serves as cofactor.

Its subcellular location is the cytoplasm. In terms of biological role, component of the cytosolic iron-sulfur (Fe/S) protein assembly (CIA) machinery. Required for maturation of extramitochondrial Fe-S proteins. The Nubp1-Nubp2 heterotetramer forms a Fe-S scaffold complex, mediating the de novo assembly of an Fe-S cluster and its transfer to target apoproteins. This Drosophila virilis (Fruit fly) protein is Cytosolic Fe-S cluster assembly factor Nubp2 homolog.